Here is a 347-residue protein sequence, read N- to C-terminus: Protein-glutamate methylesterase/protein-glutamine glutaminase 1 (347 aa).

The Response regulatory domain maps to 6–123 (RVLVVDDSAT…LRPFGDLAEK (118 aa)). Aspartate 57 bears the 4-aspartylphosphate mark. The region spanning 150 to 342 (FRVGRKIVAI…EEILKMTAAR (193 aa)) is the CheB-type methylesterase domain. Catalysis depends on residues serine 162, histidine 188, and aspartate 284.

It belongs to the CheB family. Phosphorylated by CheA. Phosphorylation of the N-terminal regulatory domain activates the methylesterase activity.

The protein localises to the cytoplasm. The enzyme catalyses [protein]-L-glutamate 5-O-methyl ester + H2O = L-glutamyl-[protein] + methanol + H(+). The catalysed reaction is L-glutaminyl-[protein] + H2O = L-glutamyl-[protein] + NH4(+). Functionally, involved in chemotaxis. Part of a chemotaxis signal transduction system that modulates chemotaxis in response to various stimuli. Catalyzes the demethylation of specific methylglutamate residues introduced into the chemoreceptors (methyl-accepting chemotaxis proteins or MCP) by CheR. Also mediates the irreversible deamidation of specific glutamine residues to glutamic acid. The protein is Protein-glutamate methylesterase/protein-glutamine glutaminase 1 of Rhizobium johnstonii (strain DSM 114642 / LMG 32736 / 3841) (Rhizobium leguminosarum bv. viciae).